The primary structure comprises 116 residues: Orphan antitoxin YagB (116 aa).

The protein belongs to the CbeA/YafW/YfjZ antitoxin family.

Its function is as follows. Putative antitoxin component of a type IV toxin-antitoxin (TA) system; its cognate toxin is unknown. This chain is Orphan antitoxin YagB (yagB), found in Escherichia coli (strain K12).